Reading from the N-terminus, the 343-residue chain is tRNA N6-adenosine threonylcarbamoyltransferase (343 aa).

Positions 111 and 115 each coordinate Fe cation. Substrate-binding positions include L134–G138, D167, G180, and N276. D304 is a binding site for Fe cation.

It belongs to the KAE1 / TsaD family. Requires Fe(2+) as cofactor.

It is found in the cytoplasm. The catalysed reaction is L-threonylcarbamoyladenylate + adenosine(37) in tRNA = N(6)-L-threonylcarbamoyladenosine(37) in tRNA + AMP + H(+). In terms of biological role, required for the formation of a threonylcarbamoyl group on adenosine at position 37 (t(6)A37) in tRNAs that read codons beginning with adenine. Is involved in the transfer of the threonylcarbamoyl moiety of threonylcarbamoyl-AMP (TC-AMP) to the N6 group of A37, together with TsaE and TsaB. TsaD likely plays a direct catalytic role in this reaction. This is tRNA N6-adenosine threonylcarbamoyltransferase from Hahella chejuensis (strain KCTC 2396).